Here is a 273-residue protein sequence, read N- to C-terminus: MSDIEDLASGGLFDEPKDFYKPEEQPGSDSYARQEKHVAASEYKEPTNFNLRLTAKNPLWGHLLWNAGKVTSDYLDEHSKELVEGKKVIEFGAGAGLPSLLCHAVGAKQVVITDYPDADLLYNLKYNVDQLKKDWDAKNADFSGPSPCADVSSMKVEGFIWGNDASELIEMSGGTGYDLVILSDVVFNHSEHAKLVRSAKELLAPGGKVFVVFTPHRAKLFNEDLDFFRRAKDEAGFESEKLFELKYYPMFEEEEETKELRSMVFGYMLTLKE.

The interval 1 to 32 (MSDIEDLASGGLFDEPKDFYKPEEQPGSDSYA) is disordered. Residues 14-24 (DEPKDFYKPEE) are compositionally biased toward basic and acidic residues. Residues tryptophan 65, 92 to 94 (GAG), aspartate 114, tryptophan 161, and serine 183 each bind S-adenosyl-L-methionine.

This sequence belongs to the class I-like SAM-binding methyltransferase superfamily. EFM7 family.

Its subcellular location is the cytoplasm. Functionally, S-adenosyl-L-methionine-dependent protein methyltransferase that trimethylates the N-terminal glycine 'Gly-2' of elongation factor 1-alpha, before also catalyzing the mono- and dimethylation of 'Lys-3'. In Yarrowia lipolytica (strain CLIB 122 / E 150) (Yeast), this protein is Protein N-terminal and lysine N-methyltransferase EFM7.